Here is a 415-residue protein sequence, read N- to C-terminus: Metal tolerance protein 5 (415 aa).

The Cytoplasmic segment spans residues 1 to 124 (MAAAVAGGGE…REKVARSETL (124 aa)). A helical transmembrane segment spans residues 125–145 (AIRLSNIANMVLFAAKVYASV). At 146 to 150 (RSGSL) the chain is on the vacuolar side. The chain crosses the membrane as a helical span at residues 151–171 (AIIASTLDSLLDLLSGFILWF). Residues 172–192 (TAFSMQTPNPYRYPIGKKRMQ) are Cytoplasmic-facing. Residues 193-213 (PLGILVFASVMATLGLQIILE) traverse the membrane as a helical segment. Residues 214–232 (SVRSLLSDGDEFSLTKEQE) are Vacuolar-facing. Residues 233 to 253 (KWVVDIMLAVTLVKLALVLYC) traverse the membrane as a helical segment. The Cytoplasmic segment spans residues 254–268 (RTFTNEIVKAYAQDH). Residues 269-291 (FFDVITNMIGLVAALLATYIEGW) traverse the membrane as a helical segment. Residues 292-293 (ID) are Vacuolar-facing. Residues 294–313 (PVGAIILAIYTIRTWSMTVL) form a helical membrane-spanning segment. The Cytoplasmic portion of the chain corresponds to 314-415 (ENVHSLVGQS…RPEHALSHEK (102 aa)).

Belongs to the cation diffusion facilitator (CDF) transporter (TC 2.A.4) family. SLC30A subfamily.

Its subcellular location is the vacuole membrane. Functionally, involved in sequestration of excess metal in the cytoplasm into vacuoles to maintain metal homeostasis. This chain is Metal tolerance protein 5 (MTP5), found in Oryza sativa subsp. japonica (Rice).